The chain runs to 263 residues: Palmitoyltransferase ZDHHC21 (263 aa).

Residues 1–4 (MKMR) lie on the Cytoplasmic side of the membrane. The helical transmembrane segment at 5-25 (LHFVVDPMGWFCMSMVFFVWI) threads the bilayer. At 26-44 (YNSFLIPKLVLLPHYAEGH) the chain is on the extracellular side. The chain crosses the membrane as a helical span at residues 45–65 (ITAEPVICYYLASLLCFSALF). Residues 66–131 (RASTTDPGKL…WINNCVGEDN (66 aa)) lie on the Cytoplasmic side of the membrane. In terms of domain architecture, DHHC spans 90–140 (ELCNKCNMMRPKRSHHCSRCGHCVRRMDHHCPWINNCVGEDNHWLFLQLCF). The active-site S-palmitoyl cysteine intermediate is the Cys120. The helical transmembrane segment at 132-152 (HWLFLQLCFYTQVLSFYTLVL) threads the bilayer. At 153-181 (DFCQYYYFLPLSSVDQADFAVHHELALLR) the chain is on the extracellular side. A helical transmembrane segment spans residues 182–202 (VSCFMGLIMFGGISSLFYTQV). Over 203–263 (KGILTDTTTI…KLNLTIRSHV (61 aa)) the chain is Cytoplasmic.

It belongs to the DHHC palmitoyltransferase family.

Its subcellular location is the golgi apparatus membrane. It is found in the golgi apparatus. The protein localises to the cis-Golgi network membrane. It localises to the cell membrane. It carries out the reaction L-cysteinyl-[protein] + hexadecanoyl-CoA = S-hexadecanoyl-L-cysteinyl-[protein] + CoA. Functionally, palmitoyltransferase that catalyzes the addition of palmitate onto various protein substrates. This is Palmitoyltransferase ZDHHC21 from Danio rerio (Zebrafish).